The sequence spans 249 residues: Aspartate/glutamate leucyltransferase (249 aa).

It belongs to the R-transferase family. Bpt subfamily.

Its subcellular location is the cytoplasm. The enzyme catalyses N-terminal L-glutamyl-[protein] + L-leucyl-tRNA(Leu) = N-terminal L-leucyl-L-glutamyl-[protein] + tRNA(Leu) + H(+). It catalyses the reaction N-terminal L-aspartyl-[protein] + L-leucyl-tRNA(Leu) = N-terminal L-leucyl-L-aspartyl-[protein] + tRNA(Leu) + H(+). Functions in the N-end rule pathway of protein degradation where it conjugates Leu from its aminoacyl-tRNA to the N-termini of proteins containing an N-terminal aspartate or glutamate. This chain is Aspartate/glutamate leucyltransferase, found in Brucella abortus (strain 2308).